The following is a 195-amino-acid chain: Probable cobalt-precorrin-6B C(15)-methyltransferase (decarboxylating) (195 aa).

Residues Thr-24, Gly-48 to Gly-52, Asp-72, and Ala-101 contribute to the S-adenosyl-L-methionine site.

It belongs to the methyltransferase superfamily. Archaeal-type CbiT family.

It carries out the reaction Co-precorrin-6B + S-adenosyl-L-methionine = Co-precorrin-7 + S-adenosyl-L-homocysteine + CO2. It functions in the pathway cofactor biosynthesis; adenosylcobalamin biosynthesis; cob(II)yrinate a,c-diamide from sirohydrochlorin (anaerobic route): step 8/10. Functionally, catalyzes the methylation of C-15 in cobalt-precorrin-6B followed by the decarboxylation of C-12 to form cobalt-precorrin-7. In Pyrobaculum calidifontis (strain DSM 21063 / JCM 11548 / VA1), this protein is Probable cobalt-precorrin-6B C(15)-methyltransferase (decarboxylating).